The following is a 429-amino-acid chain: 5-methylthioadenosine/S-adenosylhomocysteine deaminase (429 aa).

Residues His-65 and His-67 each coordinate Zn(2+). Residues Glu-94 and His-182 each contribute to the substrate site. His-209 provides a ligand contact to Zn(2+). 2 residues coordinate substrate: Glu-212 and Asp-297. Asp-297 contributes to the Zn(2+) binding site.

It belongs to the metallo-dependent hydrolases superfamily. MTA/SAH deaminase family. The cofactor is Zn(2+).

It catalyses the reaction S-adenosyl-L-homocysteine + H2O + H(+) = S-inosyl-L-homocysteine + NH4(+). The enzyme catalyses S-methyl-5'-thioadenosine + H2O + H(+) = S-methyl-5'-thioinosine + NH4(+). Its function is as follows. Catalyzes the deamination of 5-methylthioadenosine and S-adenosyl-L-homocysteine into 5-methylthioinosine and S-inosyl-L-homocysteine, respectively. Is also able to deaminate adenosine. The polypeptide is 5-methylthioadenosine/S-adenosylhomocysteine deaminase (Clostridium tetani (strain Massachusetts / E88)).